A 1151-amino-acid polypeptide reads, in one-letter code: Importin beta (1151 aa).

HEAT repeat units follow at residues M1–E36, P37–N82, P83–F132, P133–G175, G176–I222, P223–K269, P270–K316, A317–F377, P378–K416, E417–A453, P454–K495, A496–D540, F541–L593, P594–F642, P643–T704, P705–S756, P757–E811, T812–D880, L881–S932, P933–D978, P979–F1027, P1028–D1074, P1075–Q1120, and I1121–Q1151.

Belongs to the importin beta family.

It localises to the nucleus intermembrane space. It is found in the cytoplasm. The protein localises to the nucleus. Functions in nuclear protein import as nuclear transport receptor. Involved in encystation process. Constitutive expression enhances cyst production and increases transcription of endogenous genes involved in encystation. Level of mRNA of the transcriptional factor myb1-like protein increases in early stages of the encystation process followed by increased mRNAs of the cyst wall proteins cwp1-3. This is Importin beta from Giardia intestinalis (strain ATCC 50803 / WB clone C6) (Giardia lamblia).